The following is a 107-amino-acid chain: UPF0145 protein ECA2666 (107 aa).

Belongs to the UPF0145 family.

The sequence is that of UPF0145 protein ECA2666 from Pectobacterium atrosepticum (strain SCRI 1043 / ATCC BAA-672) (Erwinia carotovora subsp. atroseptica).